A 512-amino-acid chain; its full sequence is MAESGLAMWPSLLLLLLLPGPPPVAGLEDAAFPHLGESLQPLPRACPLRCSCPRVDTVDCDGLDLRVFPDNITRAAQHLSLQNNQLQELPYNELSRLSGLRTLNLHNNLISSEGLPDEAFESLTQLQHLCVAHNKLSVAPQFLPRSLRVADLAANQVMEIFPLTFGEKPALRSVYLHNNQLSNAGLPPDAFRGSEAIATLSLSNNQLSYLPPSLPPSLERLHLQNNLISKVPRGALSRQTQLRELYLQHNQLTDSGLDATTFSKLHSLEYLDLSHNQLTTVPAGLPRTLAILHLGRNRIRQVEAARLHGARGLRYLLLQHNQLGSSGLPAGALRPLRGLHTLHLYGNGLDRVPPALPRRLRALVLPHNHVAALGARDLVATPGLTELNLAYNRLASARVHHRAFRRLRALRSLDLAGNQLTRLPMGLPTGLRTLQLQRNQLRMLEPEPLAGLDQLRELSLAHNRLRVGDIGPGTWHELQALQVRHRLVSHTVPRAPPSPCLPCHVPNILVSW.

Positions Met1 to Gly26 are cleaved as a signal peptide. Positions Glu37–Arg74 constitute an LRRNT domain. An N-linked (GlcNAc...) asparagine glycan is attached at Asn71. LRR repeat units lie at residues Ala75–Arg96, Gly99–Ala119, Gln125–Ser146, Leu147–Glu167, Ala170–Gly193, Ala196–Pro216, Ser217–Arg238, Gln241–Thr261, Ser267–Thr288, Leu289–Gly309, Gly312–Ala332, Gly338–Arg359, Leu360–Ala380, Gly383–Ser396, Ala409–Gly430, Leu431–Gly451, and Gln454–Thr474.

The protein belongs to the small leucine-rich proteoglycan (SLRP) family. SLRP class V subfamily. Post-translationally, N-glycosylated.

The protein resides in the secreted. It is found in the extracellular space. The protein localises to the extracellular matrix. This Homo sapiens (Human) protein is Podocan-like protein 1 (PODNL1).